The chain runs to 469 residues: ATP synthase subunit beta (469 aa).

156–163 (GGAGVGKT) contacts ATP.

This sequence belongs to the ATPase alpha/beta chains family. F-type ATPases have 2 components, CF(1) - the catalytic core - and CF(0) - the membrane proton channel. CF(1) has five subunits: alpha(3), beta(3), gamma(1), delta(1), epsilon(1). CF(0) has three main subunits: a(1), b(2) and c(9-12). The alpha and beta chains form an alternating ring which encloses part of the gamma chain. CF(1) is attached to CF(0) by a central stalk formed by the gamma and epsilon chains, while a peripheral stalk is formed by the delta and b chains.

It localises to the cell membrane. The enzyme catalyses ATP + H2O + 4 H(+)(in) = ADP + phosphate + 5 H(+)(out). Functionally, produces ATP from ADP in the presence of a proton gradient across the membrane. The catalytic sites are hosted primarily by the beta subunits. The chain is ATP synthase subunit beta from Lactococcus lactis subsp. lactis (strain IL1403) (Streptococcus lactis).